The following is a 428-amino-acid chain: MQVRNKDDILICEAIENYDSESLRNILENGADPNVRVPYQYSHLHNAIEKKNGSAVSLLLKHGADPNISGFFTPPLHKAIKKGCVDIARSLLEYGAIVNLEHYCLKPIHIAANRTESKIVKLLIEYGADINSEDGANGKYPIHYAMKVYDPFRLKIIKVLLDHGADINKQSVLTNTSPLYETRFITDDLLDYIISRGANINIKGRMGRNILHEIILRNGYNDFSNILVLIDHGADINALDDEGNTPFMLHTINNNAIILANYIVSLYYLSYKARISNGMEKNMKIINKCEYLSSCINIIKEEIERMKTFKIYDGNSFQDLSLFDLLSNEDNIAIVYRLSDTLLEKMNIIKTIFPNCFRIIQNILKMLTKRYEMLLEINNIMNANLVNTKWYTLPIEIRWMILTKLDDMILRNLLLQNETNNIKNCKKQ.

8 ANK repeats span residues 6-35 (KDDI…DPNV), 39-68 (YQYS…DPNI), 71-100 (FFTP…IVNL), 103-132 (YCLK…DINS), 137-169 (NGKY…DINK), 174-202 (TNTS…NINI), 206-238 (MGRN…DINA), and 242-271 (EGNT…YLSY).

The sequence is that of Putative ankyrin repeat protein FPV234 from Fowlpox virus (strain NVSL) (FPV).